Here is a 123-residue protein sequence, read N- to C-terminus: Large ribosomal subunit protein uL18 (123 aa).

Belongs to the universal ribosomal protein uL18 family. In terms of assembly, part of the 50S ribosomal subunit; part of the 5S rRNA/L5/L18/L25 subcomplex. Contacts the 5S and 23S rRNAs.

Functionally, this is one of the proteins that bind and probably mediate the attachment of the 5S RNA into the large ribosomal subunit, where it forms part of the central protuberance. This is Large ribosomal subunit protein uL18 from Bifidobacterium animalis subsp. lactis (strain AD011).